The primary structure comprises 279 residues: Probable diacylglycerol pyrophosphate phosphatase 1 (279 aa).

Residues 1–17 (MEAVGKHVKLFWNVYSD) are Lumenal-facing. Residues 18-38 (YAVLIAISLSYFVFDVLMLPF) form a helical membrane-spanning segment. The Cytoplasmic segment spans residues 39 to 58 (TRQFSLEDITISHPFALHEQ). Residues 59 to 79 (VPTKYLGIICVFFPALVLYGF) form a helical membrane-spanning segment. Topologically, residues 80–86 (GKLRNNS) are lumenal. The chain crosses the membrane as a helical span at residues 87–107 (LLFWKSLMGLLYSTMVCGLCV). Residues 108–163 (SLLKNAVGRPRPDFLARCQPFESTPKTGLVDVLSCSVPWSDKVLQDGFRSFPSGHT) are Cytoplasmic-facing. The tract at residues 111 to 119 (KNAVGRPRP) is phosphatase sequence motif I. Residues 159-162 (PSGH) are phosphatase sequence motif II. A helical membrane pass occupies residues 164 to 184 (SFSFAGLGFLAIFLAGQLKMF). Residues 185-187 (RNK) lie on the Lumenal side of the membrane. The helical transmembrane segment at 188 to 208 (TSSWKVVVPLVPLSIASWIGL) threads the bilayer. Topologically, residues 209-220 (SRSQDYRHHKED) are cytoplasmic. The tract at residues 209-220 (SRSQDYRHHKED) is phosphatase sequence motif III. A helical transmembrane segment spans residues 221–241 (IAVGALFGFAIAYVVYRQLFP). Residues 242–279 (PLDHHNADILYVQAELDEGYTNVHSAGNSSATNAEQMV) lie on the Lumenal side of the membrane.

The protein belongs to the PA-phosphatase related phosphoesterase family.

The protein resides in the vacuole membrane. It is found in the endoplasmic reticulum membrane. It catalyses the reaction a 1,2-diacyl-sn-glycerol 3-diphosphate + H2O = a 1,2-diacyl-sn-glycero-3-phosphate + phosphate + H(+). The catalysed reaction is a 1,2-diacyl-sn-glycero-3-phosphate + H2O = a 1,2-diacyl-sn-glycerol + phosphate. Its function is as follows. Catalyzes the dephosphorylation of diacylglycerol phosphate (DGPP) to phosphatidate (PA) and the subsequent dephosphorylation of PA to diacylglycerol (DAG). The sequence is that of Probable diacylglycerol pyrophosphate phosphatase 1 (dpp1) from Schizosaccharomyces pombe (strain 972 / ATCC 24843) (Fission yeast).